Consider the following 273-residue polypeptide: Inactive endochitinase At2g43600 (273 aa).

Positions 1–22 (MTIKNVIFSLFILAILAETVFS) are cleaved as a signal peptide. One can recognise a Chitin-binding type-1 domain in the interval 23 to 61 (QNCMDTSCPGLKECCSRWGFCGTKDEYCGFFCFSGPCNI). Intrachain disulfides connect cysteine 25-cysteine 37, cysteine 30-cysteine 43, cysteine 36-cysteine 50, and cysteine 54-cysteine 59. Residues 78 to 273 (GKIETVITSA…GVTPDQGLDC (196 aa)) form a catalytic region. Residue asparagine 99 is glycosylated (N-linked (GlcNAc...) asparagine).

Belongs to the glycosyl hydrolase 19 family. Chitinase class I subfamily.

This is Inactive endochitinase At2g43600 from Arabidopsis thaliana (Mouse-ear cress).